The following is a 433-amino-acid chain: GTPase Obg (433 aa).

The region spanning 2 to 160 (PTFVDQTKIE…RVLRLELKLL (159 aa)) is the Obg domain. An OBG-type G domain is found at 161–334 (ADVGLVGFPS…LMNDTATLVE (174 aa)). GTP-binding positions include 167 to 174 (GFPSVGKS), 192 to 196 (FTTLT), 214 to 217 (DLPG), 284 to 287 (SQMD), and 315 to 317 (SSV). The Mg(2+) site is built by Ser-174 and Thr-194. An OCT domain is found at 355–433 (YKAPQRNEFM…IGKFVFEFVQ (79 aa)).

Belongs to the TRAFAC class OBG-HflX-like GTPase superfamily. OBG GTPase family. Monomer. The cofactor is Mg(2+).

It localises to the cytoplasm. Functionally, an essential GTPase which binds GTP, GDP and possibly (p)ppGpp with moderate affinity, with high nucleotide exchange rates and a fairly low GTP hydrolysis rate. Plays a role in control of the cell cycle, stress response, ribosome biogenesis and in those bacteria that undergo differentiation, in morphogenesis control. The polypeptide is GTPase Obg (Lactobacillus acidophilus (strain ATCC 700396 / NCK56 / N2 / NCFM)).